A 1223-amino-acid chain; its full sequence is ATP-dependent DNA helicase P143 (1223 aa).

The Nuclear localization signal motif lies at 692-701 (RKCRCVQKIK). 919–926 (GVPLSGKS) serves as a coordination point for ATP. Residues 967–981 (TINELKKCSESFFKK) constitute a DNA-binding region (H-T-H motif).

The protein resides in the host nucleus. The enzyme catalyses ATP + H2O = ADP + phosphate + H(+). Essential for the initiation of viral DNA replication, it may contribute to other functions such as controlling the switch to the late phase and leading to the inhibition of host protein synthesis. Required for late and very late gene expression. This chain is ATP-dependent DNA helicase P143 (P143), found in Orgyia pseudotsugata multicapsid polyhedrosis virus (OpMNPV).